Here is a 510-residue protein sequence, read N- to C-terminus: Ectonucleoside triphosphate diphosphohydrolase 1 (510 aa).

At 1 to 16 (MEDIKDSKVKRFCSKN) the chain is on the cytoplasmic side. Residues 17–37 (ILIILGFTSILAVIALIAVGL) traverse the membrane as a helical segment. Topologically, residues 38–478 (TQNKPLPENV…SPPLPHSTYI (441 aa)) are extracellular. A glycan (N-linked (GlcNAc...) asparagine) is linked at Asn73. Cys84 and Cys108 are oxidised to a cystine. The Proton acceptor role is filled by Glu174. 3 N-linked (GlcNAc...) asparagine glycosylation sites follow: Asn226, Asn291, and Asn333. Disulfide bonds link Cys254-Cys300 and Cys281-Cys324. Disulfide bonds link Cys337–Cys342 and Cys391–Cys414. N-linked (GlcNAc...) asparagine glycosylation is found at Asn428 and Asn457. A helical transmembrane segment spans residues 479-499 (GLMVLFSLLLVAVAITGLFIY). Over 500 to 510 (SKPSYFWKEAV) the chain is Cytoplasmic.

Belongs to the GDA1/CD39 NTPase family. In terms of assembly, homodimer; disulfide-linked. Ca(2+) is required as a cofactor. The cofactor is Mg(2+). Post-translationally, N-glycosylated. The N-terminus is blocked. In terms of processing, palmitoylated on Cys-13; which is required for caveola targeting.

The protein resides in the membrane. Its subcellular location is the caveola. The catalysed reaction is a ribonucleoside 5'-triphosphate + 2 H2O = a ribonucleoside 5'-phosphate + 2 phosphate + 2 H(+). The enzyme catalyses a ribonucleoside 5'-triphosphate + H2O = a ribonucleoside 5'-diphosphate + phosphate + H(+). It catalyses the reaction a ribonucleoside 5'-diphosphate + H2O = a ribonucleoside 5'-phosphate + phosphate + H(+). It carries out the reaction ATP + 2 H2O = AMP + 2 phosphate + 2 H(+). The catalysed reaction is ATP + H2O = ADP + phosphate + H(+). The enzyme catalyses ADP + H2O = AMP + phosphate + H(+). It catalyses the reaction CTP + 2 H2O = CMP + 2 phosphate + 2 H(+). It carries out the reaction CTP + H2O = CDP + phosphate + H(+). The catalysed reaction is CDP + H2O = CMP + phosphate + H(+). The enzyme catalyses GTP + 2 H2O = GMP + 2 phosphate + 2 H(+). It catalyses the reaction GTP + H2O = GDP + phosphate + H(+). It carries out the reaction GDP + H2O = GMP + phosphate + H(+). The catalysed reaction is ITP + 2 H2O = IMP + 2 phosphate + 2 H(+). The enzyme catalyses ITP + H2O = IDP + phosphate + H(+). It catalyses the reaction IDP + H2O = IMP + phosphate + H(+). It carries out the reaction UTP + 2 H2O = UMP + 2 phosphate + 2 H(+). The catalysed reaction is UTP + H2O = UDP + phosphate + H(+). The enzyme catalyses UDP + H2O = UMP + phosphate + H(+). Functionally, catalyzes the hydrolysis of both di- and triphosphate nucleotides (NDPs and NTPs) and hydrolyze NTPs to nucleotide monophosphates (NMPs) in two distinct successive phosphate-releasing steps, with NDPs as intermediates and participates in the regulation of extracellular levels of nucleotides. By hydrolyzing proinflammatory ATP and platelet-activating ADP to AMP, it blocks platelet aggregation and supports blood flow. The sequence is that of Ectonucleoside triphosphate diphosphohydrolase 1 from Mus musculus (Mouse).